The chain runs to 1252 residues: DNA-directed RNA polymerase subunit beta (1252 aa).

Belongs to the RNA polymerase beta chain family. As to quaternary structure, the RNAP catalytic core consists of 2 alpha, 1 beta, 1 beta' and 1 omega subunit. When a sigma factor is associated with the core the holoenzyme is formed, which can initiate transcription.

It catalyses the reaction RNA(n) + a ribonucleoside 5'-triphosphate = RNA(n+1) + diphosphate. Its function is as follows. DNA-dependent RNA polymerase catalyzes the transcription of DNA into RNA using the four ribonucleoside triphosphates as substrates. This Chlamydia felis (strain Fe/C-56) (Chlamydophila felis) protein is DNA-directed RNA polymerase subunit beta.